The sequence spans 1268 residues: uncharacterized protein (1268 aa).

Residues 191–206 (KIVSVKPSKSSQQVDV) are compositionally biased toward low complexity. 2 disordered regions span residues 191-235 (KIVS…SKKK) and 253-273 (NCRS…SKGC). Basic and acidic residues predominate over residues 223 to 235 (RKPEKSSQDSKKK). The CCHC-type zinc finger occupies 239 to 256 (PTCFYCNKKGHYATNCRS). Residues 465–644 (EMGVIVPITY…KQVTFLGFVD (180 aa)) form the Reverse transcriptase domain. The 154-residue stretch at 844 to 997 (VPEAPWKRIH…TPAECHFGRK (154 aa)) folds into the Integrase catalytic domain. The tract at residues 1092–1268 (GDYSRSSVNP…RRERVRTTWR (177 aa)) is disordered. 2 stretches are compositionally biased toward polar residues: residues 1127 to 1143 (VTSN…SRIT) and 1160 to 1169 (GSCSPTNNDV). Residues 1208 to 1221 (PSTSTGTPRGSTST) are compositionally biased toward low complexity. Positions 1222-1249 (QLGQASTRNGSRYTASGRNPSCQGNRYS) are enriched in polar residues. Basic and acidic residues predominate over residues 1257–1268 (TARRERVRTTWR).

This is an uncharacterized protein from Caenorhabditis elegans.